The sequence spans 182 residues: Transcription termination/antitermination protein NusG (182 aa).

Residues 131–163 (VGEQVRIKSGPFANQVGEVQEIEADKFKLTVLV) enclose the KOW domain.

Belongs to the NusG family.

In terms of biological role, participates in transcription elongation, termination and antitermination. This is Transcription termination/antitermination protein NusG from Staphylococcus carnosus (strain TM300).